We begin with the raw amino-acid sequence, 189 residues long: Peptidyl-tRNA hydrolase (189 aa).

Tyrosine 15 lines the tRNA pocket. Histidine 20 serves as the catalytic Proton acceptor. Residues phenylalanine 66, asparagine 68, and asparagine 114 each coordinate tRNA.

This sequence belongs to the PTH family. Monomer.

The protein resides in the cytoplasm. The catalysed reaction is an N-acyl-L-alpha-aminoacyl-tRNA + H2O = an N-acyl-L-amino acid + a tRNA + H(+). Its function is as follows. Hydrolyzes ribosome-free peptidyl-tRNAs (with 1 or more amino acids incorporated), which drop off the ribosome during protein synthesis, or as a result of ribosome stalling. Functionally, catalyzes the release of premature peptidyl moieties from peptidyl-tRNA molecules trapped in stalled 50S ribosomal subunits, and thus maintains levels of free tRNAs and 50S ribosomes. The sequence is that of Peptidyl-tRNA hydrolase from Streptococcus pyogenes serotype M1.